We begin with the raw amino-acid sequence, 379 residues long: Queuine tRNA-ribosyltransferase (379 aa).

D94 (proton acceptor) is an active-site residue. Substrate contacts are provided by residues 94–98 (DSGGF), D148, Q191, and G218. An RNA binding region spans residues 249 to 255 (GVGSPDS). D268 functions as the Nucleophile in the catalytic mechanism. The RNA binding; important for wobble base 34 recognition stretch occupies residues 273–277 (TRIAR). Residues C306, C308, C311, and H337 each contribute to the Zn(2+) site.

The protein belongs to the queuine tRNA-ribosyltransferase family. In terms of assembly, homodimer. Within each dimer, one monomer is responsible for RNA recognition and catalysis, while the other monomer binds to the replacement base PreQ1. Requires Zn(2+) as cofactor.

It carries out the reaction 7-aminomethyl-7-carbaguanine + guanosine(34) in tRNA = 7-aminomethyl-7-carbaguanosine(34) in tRNA + guanine. It functions in the pathway tRNA modification; tRNA-queuosine biosynthesis. Functionally, catalyzes the base-exchange of a guanine (G) residue with the queuine precursor 7-aminomethyl-7-deazaguanine (PreQ1) at position 34 (anticodon wobble position) in tRNAs with GU(N) anticodons (tRNA-Asp, -Asn, -His and -Tyr). Catalysis occurs through a double-displacement mechanism. The nucleophile active site attacks the C1' of nucleotide 34 to detach the guanine base from the RNA, forming a covalent enzyme-RNA intermediate. The proton acceptor active site deprotonates the incoming PreQ1, allowing a nucleophilic attack on the C1' of the ribose to form the product. After dissociation, two additional enzymatic reactions on the tRNA convert PreQ1 to queuine (Q), resulting in the hypermodified nucleoside queuosine (7-(((4,5-cis-dihydroxy-2-cyclopenten-1-yl)amino)methyl)-7-deazaguanosine). This is Queuine tRNA-ribosyltransferase from Bacillus cereus (strain G9842).